A 94-amino-acid polypeptide reads, in one-letter code: Integration host factor subunit beta (94 aa).

It belongs to the bacterial histone-like protein family. Heterodimer of an alpha and a beta chain.

This protein is one of the two subunits of integration host factor, a specific DNA-binding protein that functions in genetic recombination as well as in transcriptional and translational control. In Brucella abortus (strain S19), this protein is Integration host factor subunit beta.